The primary structure comprises 532 residues: CTP synthase (532 aa).

The amidoligase domain stretch occupies residues 1-267 (MAKFVFVTGG…HGLVLDQLQI (267 aa)). S13 lines the CTP pocket. S13 is a binding site for UTP. Residue 14–19 (GLGKGI) coordinates ATP. Y54 is a binding site for L-glutamine. Position 71 (D71) interacts with ATP. Positions 71 and 141 each coordinate Mg(2+). CTP is bound by residues 148 to 150 (DIE), 188 to 193 (KTKPIQ), and K224. Residues 188–193 (KTKPIQ) and K224 contribute to the UTP site. A Glutamine amidotransferase type-1 domain is found at 292-532 (EVTFVGKYIE…GFVEAIVNNK (241 aa)). An L-glutamine-binding site is contributed by G354. The Nucleophile; for glutamine hydrolysis role is filled by C381. L-glutamine-binding positions include 382–385 (LGMQ), E405, and R462. Catalysis depends on residues H507 and E509.

This sequence belongs to the CTP synthase family. As to quaternary structure, homotetramer.

The catalysed reaction is UTP + L-glutamine + ATP + H2O = CTP + L-glutamate + ADP + phosphate + 2 H(+). The enzyme catalyses L-glutamine + H2O = L-glutamate + NH4(+). It catalyses the reaction UTP + NH4(+) + ATP = CTP + ADP + phosphate + 2 H(+). Its pathway is pyrimidine metabolism; CTP biosynthesis via de novo pathway; CTP from UDP: step 2/2. Its activity is regulated as follows. Allosterically activated by GTP, when glutamine is the substrate; GTP has no effect on the reaction when ammonia is the substrate. The allosteric effector GTP functions by stabilizing the protein conformation that binds the tetrahedral intermediate(s) formed during glutamine hydrolysis. Inhibited by the product CTP, via allosteric rather than competitive inhibition. Functionally, catalyzes the ATP-dependent amination of UTP to CTP with either L-glutamine or ammonia as the source of nitrogen. Regulates intracellular CTP levels through interactions with the four ribonucleotide triphosphates. In Mesoplasma florum (strain ATCC 33453 / NBRC 100688 / NCTC 11704 / L1) (Acholeplasma florum), this protein is CTP synthase.